The sequence spans 306 residues: 1-aminocyclopropane-1-carboxylate oxidase (306 aa).

The Fe2OG dioxygenase domain maps to 153 to 253 (PFFGTKVSHY…RRSIASFYNP (101 aa)). Residues His-177, Asp-179, and His-234 each contribute to the Fe cation site.

Belongs to the iron/ascorbate-dependent oxidoreductase family. It depends on Fe cation as a cofactor.

The enzyme catalyses 1-aminocyclopropane-1-carboxylate + L-ascorbate + O2 = ethene + L-dehydroascorbate + hydrogen cyanide + CO2 + 2 H2O. The protein operates within alkene biosynthesis; ethylene biosynthesis via S-adenosyl-L-methionine; ethylene from S-adenosyl-L-methionine: step 2/2. The polypeptide is 1-aminocyclopropane-1-carboxylate oxidase (MAO1B) (Musa acuminata (Banana)).